Here is a 229-residue protein sequence, read N- to C-terminus: Large ribosomal subunit protein uL1 (229 aa).

Belongs to the universal ribosomal protein uL1 family. In terms of assembly, part of the 50S ribosomal subunit.

Its function is as follows. Binds directly to 23S rRNA. The L1 stalk is quite mobile in the ribosome, and is involved in E site tRNA release. Functionally, protein L1 is also a translational repressor protein, it controls the translation of the L11 operon by binding to its mRNA. The polypeptide is Large ribosomal subunit protein uL1 (Lactococcus lactis subsp. lactis (strain IL1403) (Streptococcus lactis)).